Here is a 342-residue protein sequence, read N- to C-terminus: Polycomb group RING finger protein 2 (342 aa).

An RING-type zinc finger spans residues 18 to 57; that stretch reads CALCGGYFIDATTIVECLHSFCKTCIVRYLETNKYCPMCD. Glycyl lysine isopeptide (Lys-Gly) (interchain with G-Cter in SUMO2) cross-links involve residues Lys-51 and Lys-88. The short motif at 81-95 is the Nuclear localization signal element; that stretch reads KLVPGLFKDEMKRRR. Thr-237 bears the Phosphothreonine; by PKA mark. Residues 237-342 are disordered; that stretch reads TLPTVPTPSE…MTVNGAPCPP (106 aa). Residues 243–253 are compositionally biased toward polar residues; it reads TPSEGTNTSGA. Over residues 263–318 the composition is skewed to low complexity; the sequence is APSPATLPATSSSLPSPATPSHGSPSSHGPPATHPTSPTPPSTAAGTTTATNGGTS. Residues 319-328 are compositionally biased toward polar residues; that stretch reads NCLQTPSSTS. At Thr-334 the chain carries Phosphothreonine; by PKA.

Exists as both a monomer and homodimer. Component of a PRC1-like complex. Interacts with CBX8, RING1 and RNF2. Interacts with CBX7. Interacts with PHC2. Post-translationally, phosphorylated. Homodimer formation is regulated by phosphorylation with only unphosphorylated proteins forming homodimers. In terms of tissue distribution, expressed in embryonic stem cells. Expressed in a variety of tumor cells and in neural tissues.

Its subcellular location is the nucleus. Transcriptional repressor. Binds specifically to the DNA sequence 5'-GACTNGACT-3'. Has tumor suppressor activity. May play a role in control of cell proliferation and/or neural cell development. Regulates proliferation of early T progenitor cells by maintaining expression of HES1. Also plays a role in antero-posterior specification of the axial skeleton and negative regulation of the self-renewal activity of hematopoietic stem cells. Component of a Polycomb group (PcG) multiprotein PRC1-like complex, a complex class required to maintain the transcriptionally repressive state of many genes, including Hox genes, throughout development. PcG PRC1 complex acts via chromatin remodeling and modification of histones; it mediates monoubiquitination of histone H2A 'Lys-119', rendering chromatin heritably changed in its expressibility. Within the PRC1-like complex, regulates RNF2 ubiquitin ligase activity. This Mus musculus (Mouse) protein is Polycomb group RING finger protein 2 (Pcgf2).